A 562-amino-acid polypeptide reads, in one-letter code: Vacuolar basic amino acid transporter 1 (562 aa).

Residues 1–30 (MQTLDETSNLLPPPEEAEAPPLEQKFHEYN) lie on the Vacuolar side of the membrane. The helical transmembrane segment at 31 to 51 (LALPKFPILFSLWLGSFLSSL) threads the bilayer. At 52-100 (DSTIVANIMNRVAEEFSESSKKQWIATSFLLTNTAFQPLYGKLSDITGR) the chain is on the cytoplasmic side. The helical transmembrane segment at 101 to 121 (KSALLTAQFFFGLGCLLTCFA) threads the bilayer. Residues 122–131 (RNVTEFSIAR) are Vacuolar-facing. An N-linked (GlcNAc...) asparagine glycan is attached at asparagine 123. A helical transmembrane segment spans residues 132–152 (AICGIGAGGLNAISSIAVSDI). Topologically, residues 153-166 (CTARERGVYQGYAN) are cytoplasmic. A helical transmembrane segment spans residues 167–187 (IVFGFGQLLGAPLGGVFIETI). Residues 188-190 (GWR) lie on the Vacuolar side of the membrane. The chain crosses the membrane as a helical span at residues 191–211 (ALFGIQVPVIMLCSVLAIKNI). The Cytoplasmic segment spans residues 212 to 232 (NIKLFHVPPMKERYTLKNLSR). A helical transmembrane segment spans residues 233–253 (IDIFGSLSLVATISGVLFLCS). At 254–255 (SQ) the chain is on the vacuolar side. Residues 256 to 276 (LNKLYLALFTIGSFIVFILVE) traverse the membrane as a helical segment. Topologically, residues 277-292 (RYYATEKILPFELLTR) are cytoplasmic. Residues 293-313 (SFCLSSAVTVISSFVVFGEIF) form a helical membrane-spanning segment. The Vacuolar portion of the chain corresponds to 314–331 (RSPIYLQLLQNISVTKTG). An N-linked (GlcNAc...) asparagine glycan is attached at asparagine 324. Residues 332–352 (LFLIFPSISVAVGSLVTGWVL) form a helical membrane-spanning segment. Residues 353-365 (RNTKINLAHCAYQ) are Cytoplasmic-facing. Residues 366–386 (IIFGGMIMQLLGLGLGYFLLS) form a helical membrane-spanning segment. The Vacuolar segment spans residues 387-419 (HLNPDYTIYDMLESITFRSNSIWWKLIYVFASV). Residues 420 to 440 (LVSFGYACLLVATLVSIVFTV) form a helical membrane-spanning segment. Topologically, residues 441-448 (EKSQQGTM) are cytoplasmic. The helical transmembrane segment at 449–469 (TGVFYLWRSIGNVLGASLTLV) threads the bilayer. The Vacuolar segment spans residues 470–528 (SYENSLSSMLWNYMFKTKRDDEYHFTKKQYYSLINDSSYLRGPNFPTDIFVRILDVYKK). Asparagine 504 carries N-linked (GlcNAc...) asparagine glycosylation. Residues 529–549 (AFLISYIPNIALAAVGIVLSL) form a helical membrane-spanning segment. Topologically, residues 550 to 562 (YLVKHTYKRSSSS) are cytoplasmic.

It belongs to the major facilitator superfamily.

It is found in the vacuole membrane. Functionally, transporter required for vacuolar uptake of at least histidine and lysine. This Saccharomyces cerevisiae (strain ATCC 204508 / S288c) (Baker's yeast) protein is Vacuolar basic amino acid transporter 1 (VBA1).